A 144-amino-acid polypeptide reads, in one-letter code: UPF0102 protein sce2912 (144 aa).

This sequence belongs to the UPF0102 family.

The sequence is that of UPF0102 protein sce2912 from Sorangium cellulosum (strain So ce56) (Polyangium cellulosum (strain So ce56)).